We begin with the raw amino-acid sequence, 43 residues long: Protein PsbN (43 aa).

The helical transmembrane segment at 5-27 (TLVAISISGLLVSFTGYALYTAF) threads the bilayer.

Belongs to the PsbN family.

Its subcellular location is the plastid. The protein localises to the chloroplast thylakoid membrane. Its function is as follows. May play a role in photosystem I and II biogenesis. This Coelogyne cristata (Orchid) protein is Protein PsbN.